The sequence spans 84 residues: Large ribosomal subunit protein bL31B (84 aa).

Belongs to the bacterial ribosomal protein bL31 family. Type B subfamily. As to quaternary structure, part of the 50S ribosomal subunit.

The sequence is that of Large ribosomal subunit protein bL31B from Rhodococcus opacus (strain B4).